Here is a 111-residue protein sequence, read N- to C-terminus: Small ribosomal subunit protein uS17 (111 aa).

The protein belongs to the universal ribosomal protein uS17 family. In terms of assembly, part of the 30S ribosomal subunit.

Its function is as follows. One of the primary rRNA binding proteins, it binds specifically to the 5'-end of 16S ribosomal RNA. This is Small ribosomal subunit protein uS17 from Methanocella arvoryzae (strain DSM 22066 / NBRC 105507 / MRE50).